The chain runs to 485 residues: Aldehyde dehydrogenase family 3 member A2 (485 aa).

Over 1–463 the chain is Cytoplasmic; that stretch reads MELEVRRVRQ…FLLKRFNKEK (463 aa). Position 185–190 (185–190) interacts with NAD(+); sequence GNTAVG. Residues Glu-207 and Cys-241 contribute to the active site. Ser-293 carries the post-translational modification Phosphoserine. A helical transmembrane segment spans residues 464–484; sequence LGLLLLTFLGIVAAVLVKAEY. Residues 481-484 carry the Prevents secretion from ER motif; sequence KAEY.

The protein belongs to the aldehyde dehydrogenase family. Homodimer.

It is found in the microsome membrane. Its subcellular location is the endoplasmic reticulum membrane. The catalysed reaction is an aldehyde + NAD(+) + H2O = a carboxylate + NADH + 2 H(+). The enzyme catalyses a fatty aldehyde + NAD(+) + H2O = a fatty acid + NADH + 2 H(+). It carries out the reaction (2E)-hexadecenal + NAD(+) + H2O = (E)-hexadec-2-enoate + NADH + 2 H(+). It catalyses the reaction hexadecanoate + NADH + 2 H(+) = hexadecanal + NAD(+) + H2O. The catalysed reaction is 22-oxodocosanoate + NAD(+) + H2O = docosanedioate + NADH + 2 H(+). The enzyme catalyses 2,6,10,14-tetramethylpentadecanal + NAD(+) + H2O = 2,6,10,14-tetramethylpentadecanoate + NADH + 2 H(+). It carries out the reaction octadecanal + NAD(+) + H2O = octadecanoate + NADH + 2 H(+). It catalyses the reaction dodecanoate + NADH + 2 H(+) = dodecanal + NAD(+) + H2O. The catalysed reaction is decanal + NAD(+) + H2O = decanoate + NADH + 2 H(+). The enzyme catalyses tetradecanal + NAD(+) + H2O = tetradecanoate + NADH + 2 H(+). It carries out the reaction octanal + NAD(+) + H2O = octanoate + NADH + 2 H(+). It catalyses the reaction heptanal + NAD(+) + H2O = heptanoate + NADH + 2 H(+). The catalysed reaction is (2E,6E)-farnesal + NAD(+) + H2O = (2E,6E)-farnesoate + NADH + 2 H(+). Its function is as follows. Catalyzes the oxidation of medium and long-chain aliphatic aldehydes to fatty acids. Active on a variety of saturated and unsaturated aliphatic aldehydes between 6 and 24 carbons in length. Responsible for conversion of the sphingosine 1-phosphate (S1P) degradation product hexadecenal to hexadecenoic acid. The protein is Aldehyde dehydrogenase family 3 member A2 (ALDH3A2) of Pongo abelii (Sumatran orangutan).